The sequence spans 318 residues: Probable metal transport system membrane protein CT_070 (318 aa).

Transmembrane regions (helical) follow at residues 1–21 (MVASISPYYGVSFLEFFLVFF), 39–59 (IQVIVFFAIAVSCSVVGTFLV), 64–84 (AMYANVVSHTILFGLVCVCLF), 94–114 (QALTIAAVSTTLLTGASIHFI), 124–144 (ASTALVFSLLFSASLLLLVFL), 170–190 (IFLVLLINLGISYCFFSSFVC), 196–216 (IFAFSLGIRIRLVDYLIMLLL), 226–246 (AVGVLMSLAFLLIPGLIAKLI), 252–272 (EMMVYSMVFGGLAALIAPALS), and 285–305 (TSGLAVGLLLVFYVVMLVFVC).

The protein belongs to the ABC-3 integral membrane protein family.

It localises to the cell inner membrane. Its function is as follows. Part of an ATP-driven transport system CT_067/CT_068/CT_069/CT_070 for a metal. This chain is Probable metal transport system membrane protein CT_070, found in Chlamydia trachomatis serovar D (strain ATCC VR-885 / DSM 19411 / UW-3/Cx).